Reading from the N-terminus, the 218-residue chain is Small ribosomal subunit protein uS3c (218 aa).

The KH type-2 domain maps to 47-118 (VQKNMRTSSG…KLNIAVTRIA (72 aa)).

This sequence belongs to the universal ribosomal protein uS3 family. In terms of assembly, part of the 30S ribosomal subunit.

The protein localises to the plastid. It localises to the chloroplast. This is Small ribosomal subunit protein uS3c (rps3) from Atropa belladonna (Belladonna).